We begin with the raw amino-acid sequence, 373 residues long: Protein phosphatase 1K, mitochondrial (373 aa).

The 253-residue stretch at 95–347 folds into the PPM-type phosphatase domain; sequence KVGCSTQLGK…DNSTAIVVPF (253 aa). The Mg(2+) site is built by D128, G129, and D338.

It belongs to the PP2C family. Mg(2+) serves as cofactor. Mn(2+) is required as a cofactor.

The protein localises to the mitochondrion matrix. The enzyme catalyses O-phospho-L-seryl-[protein] + H2O = L-seryl-[protein] + phosphate. It carries out the reaction O-phospho-L-threonyl-[protein] + H2O = L-threonyl-[protein] + phosphate. This chain is Protein phosphatase 1K, mitochondrial (ppm1k), found in Xenopus laevis (African clawed frog).